Reading from the N-terminus, the 146-residue chain is Cytochrome c-556 (146 aa).

The N-terminal stretch at 1-24 (MCMKLKTITAAMLFGCLCAGAVYA) is a signal peptide. Heme c is bound by residues M35, C135, C138, and H139.

In terms of assembly, monomer. Binds 1 heme c group covalently per subunit.

In terms of biological role, low-spin monoheme cytochrome c. This is Cytochrome c-556 from Agrobacterium fabrum (strain C58 / ATCC 33970) (Agrobacterium tumefaciens (strain C58)).